Here is a 318-residue protein sequence, read N- to C-terminus: Ribosomal RNA small subunit methyltransferase A (318 aa).

Residues Asn-40, Val-42, Gly-67, Glu-88, Asp-118, and Asn-137 each coordinate S-adenosyl-L-methionine. The span at 296–305 shows a compositional bias: basic and acidic residues; it reads ADRGGSDREG. The tract at residues 296–318 is disordered; that stretch reads ADRGGSDREGTSPPTAGQGAPAC.

This sequence belongs to the class I-like SAM-binding methyltransferase superfamily. rRNA adenine N(6)-methyltransferase family. RsmA subfamily.

It is found in the cytoplasm. It carries out the reaction adenosine(1518)/adenosine(1519) in 16S rRNA + 4 S-adenosyl-L-methionine = N(6)-dimethyladenosine(1518)/N(6)-dimethyladenosine(1519) in 16S rRNA + 4 S-adenosyl-L-homocysteine + 4 H(+). Specifically dimethylates two adjacent adenosines (A1518 and A1519) in the loop of a conserved hairpin near the 3'-end of 16S rRNA in the 30S particle. May play a critical role in biogenesis of 30S subunits. The protein is Ribosomal RNA small subunit methyltransferase A of Mycobacterium avium (strain 104).